A 112-amino-acid chain; its full sequence is uncharacterized protein (112 aa).

Residues 89–106 (TLYVLVIVGLTILCFLLV) traverse the membrane as a helical segment.

This sequence belongs to the IIV-6 466R family.

It localises to the membrane. This is an uncharacterized protein from Aedes vexans (Inland floodwater mosquito).